Reading from the N-terminus, the 390-residue chain is Succinate--CoA ligase [ADP-forming] subunit beta (390 aa).

One can recognise an ATP-grasp domain in the interval 9–245 (KHLLKKYNIP…TTQEDEHETM (237 aa)). Residues Lys-46, 53-55 (GRG), Glu-99, Ser-102, and Glu-107 contribute to the ATP site. 2 residues coordinate Mg(2+): Asn-200 and Asp-214. Residues Asn-265 and 322–324 (GIV) each bind substrate.

It belongs to the succinate/malate CoA ligase beta subunit family. Heterotetramer of two alpha and two beta subunits. Mg(2+) is required as a cofactor.

It catalyses the reaction succinate + ATP + CoA = succinyl-CoA + ADP + phosphate. It carries out the reaction GTP + succinate + CoA = succinyl-CoA + GDP + phosphate. It participates in carbohydrate metabolism; tricarboxylic acid cycle; succinate from succinyl-CoA (ligase route): step 1/1. Its function is as follows. Succinyl-CoA synthetase functions in the citric acid cycle (TCA), coupling the hydrolysis of succinyl-CoA to the synthesis of either ATP or GTP and thus represents the only step of substrate-level phosphorylation in the TCA. The beta subunit provides nucleotide specificity of the enzyme and binds the substrate succinate, while the binding sites for coenzyme A and phosphate are found in the alpha subunit. The sequence is that of Succinate--CoA ligase [ADP-forming] subunit beta from Coxiella burnetii (strain RSA 493 / Nine Mile phase I).